A 177-amino-acid chain; its full sequence is Large ribosomal subunit protein uL6 (177 aa).

It belongs to the universal ribosomal protein uL6 family. As to quaternary structure, part of the 50S ribosomal subunit.

In terms of biological role, this protein binds to the 23S rRNA, and is important in its secondary structure. It is located near the subunit interface in the base of the L7/L12 stalk, and near the tRNA binding site of the peptidyltransferase center. The chain is Large ribosomal subunit protein uL6 from Pseudoalteromonas atlantica (strain T6c / ATCC BAA-1087).